The chain runs to 294 residues: Beta-glucoside kinase (294 aa).

An ATP-binding site is contributed by 5–11; sequence AFDIGGT.

It belongs to the ROK (NagC/XylR) family.

The catalysed reaction is D-cellobiose + ATP = 6-phospho-beta-D-glucosyl-(1-&gt;4)-D-glucose + ADP + H(+). Functionally, catalyzes the ATP-dependent phosphorylation of cellobiose to produce cellobiose-6'-P. May have a dual role of kinase and transcriptional regulator of the cellobiose-PTS operon. This is Beta-glucoside kinase (bglK) from Listeria innocua serovar 6a (strain ATCC BAA-680 / CLIP 11262).